The chain runs to 161 residues: Small ribosomal subunit protein uS9 (161 aa).

This sequence belongs to the universal ribosomal protein uS9 family.

The chain is Small ribosomal subunit protein uS9 from Bartonella bacilliformis (strain ATCC 35685 / KC583 / Herrer 020/F12,63).